The primary structure comprises 425 residues: Stabilizer of axonemal microtubules 4 (425 aa).

Disordered regions lie at residues 259–297 (RGSD…YQPP) and 315–335 (NKEP…SYEQ). Residues 260-272 (GSDRDTGYSRVSE) show a composition bias toward basic and acidic residues. The span at 277-290 (PRMPTPSSQPTSMS) shows a compositional bias: low complexity. Positions 321 to 332 (FTLNNPSYVRSS) are enriched in polar residues.

As to quaternary structure, microtubule inner protein component of sperm flagellar doublet microtubules. Interacts with PPP1CA. In terms of tissue distribution, expressed in brain, ovaries and testis. Expressed in the tracheal epithelium and in secondary spermatocytes and spermatids present in the seminiferous tubule. Expressed in ependymal cells lining the ventricular walls of the brain.

The protein localises to the cell projection. It is found in the cilium. The protein resides in the cytoplasm. It localises to the cytoskeleton. Its subcellular location is the flagellum axoneme. In Rattus norvegicus (Rat), this protein is Stabilizer of axonemal microtubules 4.